The following is a 296-amino-acid chain: MVRNERTLKSTDFPQLPPAPDDYPTFPDKSTWPVVFPMLPPSPDGGPRRPPQHTSKAVAPRLSAAQLPTHVAIVMDGNGRWANQRGLHRTEGHKMGEAVVIDVACGAIELGIKWLSLYAFSTENWKRSVEEVRFLMGFNRDVVRRRRENLKEMGVRIRWVGSRPRLWRSVINELAIAEHMTAGNDVITINYCVNYGGRTEIAEATREIARLAAAGRLNPERITESTITRHLQRPDIPDVDLFVRTSGEQRSSNFMLWQAAYTEYIFQDKLWPDYDRRDLWAACEEYASRNRRFGSA.

The disordered stretch occupies residues 1 to 58 (MVRNERTLKSTDFPQLPPAPDDYPTFPDKSTWPVVFPMLPPSPDGGPRRPPQHTSKAV). Residue D76 is part of the active site. D76 contacts Mg(2+). Substrate is bound by residues 77-80 (GNGR), W81, R89, H93, and 121-123 (STE). The active-site Proton acceptor is N124. Substrate contacts are provided by residues W125, R127, R244, and 250-252 (RSS). A Mg(2+)-binding site is contributed by E263.

The protein belongs to the UPP synthase family. Homodimer. Requires Mg(2+) as cofactor.

The protein resides in the cell membrane. The catalysed reaction is (2Z,6E)-farnesyl diphosphate + 7 isopentenyl diphosphate = (2Z,6Z,10Z,14Z,18Z,22Z,26Z,30Z,34E)-decaprenyl diphosphate + 7 diphosphate. It catalyses the reaction n isopentenyl diphosphate + (2E,6E)-farnesyl diphosphate = a di-trans,poly-cis-polyprenyl diphosphate + n diphosphate. Functionally, catalyzes the sequential condensation of isopentenyl diphosphate (IPP) in the cis configuration with (2Z,6E)-farnesyl diphosphate (Z-FPP or EZ-FPP) generating the 50 carbon product trans,polycis-decaprenyl diphosphate. When (2E,6E)-farnesyl diphosphate (E-FPP or EE-FPP) is used in vitro, both primary products decaprenyl diphosphate and (2E,6E,10E)-geranylgeranyl diphosphate (EEE-GGPP) are synthesized. M.tuberculosis does not synthesize (2E,6E,10Z)-geranylgeranyl diphosphate (EEZ-GGPP) and heptaprenyl diphosphate. Can also accept many different allylic substrates, including E-geranyl diphosphate (E-GPP), neryl diphosphate (NPP), and all-trans-geranyl-geranyl diphosphate. The chain is Decaprenyl diphosphate synthase (uppS) from Mycobacterium leprae (strain TN).